A 102-amino-acid polypeptide reads, in one-letter code: Small ribosomal subunit protein uS10 (102 aa).

This sequence belongs to the universal ribosomal protein uS10 family. Part of the 30S ribosomal subunit.

Involved in the binding of tRNA to the ribosomes. The chain is Small ribosomal subunit protein uS10 from Gluconacetobacter diazotrophicus (strain ATCC 49037 / DSM 5601 / CCUG 37298 / CIP 103539 / LMG 7603 / PAl5).